Here is a 191-residue protein sequence, read N- to C-terminus: MGYVIVATGVPGVGATTVTTEAVKELEGYEHVNYGDVMLEIAKEEGLVEHRDEIRKLPAEKQREIQRLAARRIAKMAEEKEGIIVDTHCTIKTPAGYLPGLPIWVLEELQPDVIVLIEADPDEIMMRRVKDSEERQRDYDRAHEIEEHQKMNRMAAMAYAALTGATVKIIENHDDRLEEAVREFVETVRSL.

9-17 contributes to the ATP binding site; sequence GVPGVGATT.

This sequence belongs to the archaeal adenylate kinase family.

Its subcellular location is the cytoplasm. It catalyses the reaction AMP + ATP = 2 ADP. The sequence is that of Adenylate kinase from Methanopyrus kandleri (strain AV19 / DSM 6324 / JCM 9639 / NBRC 100938).